The sequence spans 267 residues: Dihydropteroate synthase (267 aa).

Residues 1–251 (MTKTKIIGIL…NVDLNVKLAQ (251 aa)) enclose the Pterin-binding domain. Asparagine 11 serves as a coordination point for Mg(2+). (7,8-dihydropterin-6-yl)methyl diphosphate contacts are provided by residues threonine 51, aspartate 84, asparagine 103, aspartate 167, lysine 203, and 239-241 (RVH).

It belongs to the DHPS family. Mg(2+) is required as a cofactor.

The enzyme catalyses (7,8-dihydropterin-6-yl)methyl diphosphate + 4-aminobenzoate = 7,8-dihydropteroate + diphosphate. It functions in the pathway cofactor biosynthesis; tetrahydrofolate biosynthesis; 7,8-dihydrofolate from 2-amino-4-hydroxy-6-hydroxymethyl-7,8-dihydropteridine diphosphate and 4-aminobenzoate: step 1/2. Catalyzes the condensation of para-aminobenzoate (pABA) with 6-hydroxymethyl-7,8-dihydropterin diphosphate (DHPt-PP) to form 7,8-dihydropteroate (H2Pte), the immediate precursor of folate derivatives. The chain is Dihydropteroate synthase (folP) from Staphylococcus haemolyticus.